We begin with the raw amino-acid sequence, 252 residues long: Zinc finger protein 511 (252 aa).

3 C2H2-type zinc fingers span residues 80 to 105, 107 to 130, and 144 to 169; these read FACQ…HTLH, NVCS…LEWH, and YQCL…VRMH. Positions 177 to 221 are disordered; it reads FDKPKKSRSPASAEAPGDSGERSEGEAMEICSEPVAASPAPAGER. Arg240 carries the post-translational modification Omega-N-methylarginine.

This sequence belongs to the krueppel C2H2-type zinc-finger protein family.

Its subcellular location is the nucleus. In terms of biological role, may be involved in transcriptional regulation. This Homo sapiens (Human) protein is Zinc finger protein 511.